We begin with the raw amino-acid sequence, 151 residues long: Putative pre-16S rRNA nuclease (151 aa).

It belongs to the YqgF nuclease family.

Its subcellular location is the cytoplasm. Its function is as follows. Could be a nuclease involved in processing of the 5'-end of pre-16S rRNA. The protein is Putative pre-16S rRNA nuclease of Neisseria gonorrhoeae (strain ATCC 700825 / FA 1090).